A 180-amino-acid polypeptide reads, in one-letter code: Trafficking protein particle complex subunit 3 (180 aa).

Cys-68 is lipidated: S-palmitoyl cysteine.

Belongs to the TRAPP small subunits family. BET3 subfamily. In terms of assembly, homodimer. Component of the multisubunit transport protein particle (TRAPP) complex, which includes at least TRAPPC2, TRAPPC2L, TRAPPC3, TRAPPC3L, TRAPPC4, TRAPPC5, TRAPPC8, TRAPPC9, TRAPPC10, TRAPPC11 and TRAPPC12. Heterodimer with TRAPPC6A. The heterodimer TRAPPC3-TRAPPC6A interacts with TRAPPC2L. Heterodimer with TRAPPC6b. The heterodimer TRAPPC6B-TRAPPC3 interacts with TRAPPC1 likely providing a core for TRAPP complex formation. As to expression, widely expressed. Expressed in lung, heart, liver, spleen, brain and kidney.

Its subcellular location is the golgi apparatus. It is found in the cis-Golgi network. It localises to the endoplasmic reticulum. Functionally, may play a role in vesicular transport from endoplasmic reticulum to Golgi. The protein is Trafficking protein particle complex subunit 3 of Mus musculus (Mouse).